We begin with the raw amino-acid sequence, 428 residues long: Dihydroorotase (428 aa).

Positions 59 and 61 each coordinate Zn(2+). Residues 61-63 and N93 each bind substrate; that span reads HLR. Residues D151, H178, and H231 each contribute to the Zn(2+) site. N277 serves as a coordination point for substrate. D304 contributes to the Zn(2+) binding site. The active site involves D304. Residues H308 and 322 to 323 each bind substrate; that span reads FG.

This sequence belongs to the metallo-dependent hydrolases superfamily. DHOase family. Class I DHOase subfamily. The cofactor is Zn(2+).

It carries out the reaction (S)-dihydroorotate + H2O = N-carbamoyl-L-aspartate + H(+). It functions in the pathway pyrimidine metabolism; UMP biosynthesis via de novo pathway; (S)-dihydroorotate from bicarbonate: step 3/3. Functionally, catalyzes the reversible cyclization of carbamoyl aspartate to dihydroorotate. This chain is Dihydroorotase, found in Bacillus anthracis (strain A0248).